Here is a 146-residue protein sequence, read N- to C-terminus: Phospholipase A2 OS2 (146 aa).

The first 27 residues, Met1–Leu27, serve as a signal peptide directing secretion. 7 cysteine pairs are disulfide-bonded: Cys38/Cys99, Cys54/Cys145, Cys56/Cys72, Cys71/Cys126, Cys78/Cys119, Cys88/Cys112, and Cys106/Cys117. Ca(2+) contacts are provided by Tyr55, Gly57, and Gly59. His75 is a catalytic residue. Asp76 provides a ligand contact to Ca(2+). Asp120 is an active-site residue.

This sequence belongs to the phospholipase A2 family. Group I subfamily. D49 sub-subfamily. As to quaternary structure, monomer. Ca(2+) is required as a cofactor. As to expression, expressed by the venom gland.

The protein resides in the secreted. It catalyses the reaction a 1,2-diacyl-sn-glycero-3-phosphocholine + H2O = a 1-acyl-sn-glycero-3-phosphocholine + a fatty acid + H(+). Its function is as follows. Snake venom phospholipase A2 (PLA2) that shows high presynaptic neurotoxicity in vertebrata that is independent of catalytic activity, as well as local myotoxicity when intramuscularly injected into mice. Blocks acetylcholine release in Aplysia neurons, and potentiates pro-inflammatory cellular signaling. Potentiates glutamate excitoxicity when coinjected into brain of rats. May act by binding in a calcium-dependent fashion and with high affinity to a neuronal-type (N-type) PLA2 receptor, and with very high affinity to a muscle-type (M-type) PLA2 receptor. In vitro, shows a high-specific activity on E.coli membranes and is more efficient on the anionic phospholipid POPG than on the anionic phospholipid POPS or the zwitterionic phospholipid POPC. Exerts catalytically-independent anti-HIV (IC(50) is 35 nM) activity and catalytically-dependent antimalarial activity (IC(50) is 3.1 nM when tested on P.falciparum grown in serum that contains lipoproteins). PLA2 catalyzes the calcium-dependent hydrolysis of the 2-acyl groups in 3-sn-phosphoglycerides. The protein is Phospholipase A2 OS2 of Oxyuranus scutellatus scutellatus (Australian taipan).